Here is a 409-residue protein sequence, read N- to C-terminus: Pyrophosphate--fructose 6-phosphate 1-phosphotransferase (409 aa).

Residue Gly-14 coordinates diphosphate. Position 123 (Asp-123) interacts with Mg(2+). Substrate is bound by residues 151–153 (TVD), 196–198 (MGR), Glu-268, and 325–328 (YFAR). Asp-153 (proton acceptor) is an active-site residue.

This sequence belongs to the phosphofructokinase type A (PFKA) family. PPi-dependent PFK group II subfamily. Clade 'P' sub-subfamily. As to quaternary structure, homodimer. The cofactor is Mg(2+).

The protein resides in the cytoplasm. The catalysed reaction is beta-D-fructose 6-phosphate + diphosphate = beta-D-fructose 1,6-bisphosphate + phosphate + H(+). The protein operates within carbohydrate degradation; glycolysis; D-glyceraldehyde 3-phosphate and glycerone phosphate from D-glucose: step 3/4. Its activity is regulated as follows. Non-allosteric. Functionally, catalyzes the phosphorylation of D-fructose 6-phosphate, the first committing step of glycolysis. Uses inorganic phosphate (PPi) as phosphoryl donor instead of ATP like common ATP-dependent phosphofructokinases (ATP-PFKs), which renders the reaction reversible, and can thus function both in glycolysis and gluconeogenesis. Consistently, PPi-PFK can replace the enzymes of both the forward (ATP-PFK) and reverse (fructose-bisphosphatase (FBPase)) reactions. In Methylomonas methanica, this protein is Pyrophosphate--fructose 6-phosphate 1-phosphotransferase.